We begin with the raw amino-acid sequence, 186 residues long: Peptidyl-tRNA hydrolase (186 aa).

Tyr-15 provides a ligand contact to tRNA. The active-site Proton acceptor is the His-20. TRNA-binding residues include Tyr-64, Asn-66, and Asn-112.

The protein belongs to the PTH family. As to quaternary structure, monomer.

It localises to the cytoplasm. The enzyme catalyses an N-acyl-L-alpha-aminoacyl-tRNA + H2O = an N-acyl-L-amino acid + a tRNA + H(+). Functionally, hydrolyzes ribosome-free peptidyl-tRNAs (with 1 or more amino acids incorporated), which drop off the ribosome during protein synthesis, or as a result of ribosome stalling. In terms of biological role, catalyzes the release of premature peptidyl moieties from peptidyl-tRNA molecules trapped in stalled 50S ribosomal subunits, and thus maintains levels of free tRNAs and 50S ribosomes. This Azobacteroides pseudotrichonymphae genomovar. CFP2 protein is Peptidyl-tRNA hydrolase.